We begin with the raw amino-acid sequence, 478 residues long: Poly(A) RNA polymerase cid11 (478 aa).

Mg(2+) is bound by residues Asp106 and Asp108. Residues Ser263–Thr317 enclose the PAP-associated domain. Residues Gln428 to Thr447 are disordered.

This sequence belongs to the DNA polymerase type-B-like family. Requires Mg(2+) as cofactor. Mn(2+) is required as a cofactor.

It is found in the cytoplasm. The protein resides in the nucleus. The enzyme catalyses RNA(n) + ATP = RNA(n)-3'-adenine ribonucleotide + diphosphate. The sequence is that of Poly(A) RNA polymerase cid11 (cid11) from Schizosaccharomyces pombe (strain 972 / ATCC 24843) (Fission yeast).